We begin with the raw amino-acid sequence, 275 residues long: Glucosamine-6-phosphate deaminase 2 (275 aa).

Asp-72 (proton acceptor; for enolization step) is an active-site residue. A coiled-coil region spans residues 103-131 (NAHILDGNASDLQAECEDFERKIKEAGGI). Asp-141 (for ring-opening step) is an active-site residue. His-143 acts as the Proton acceptor; for ring-opening step in catalysis. Glu-148 functions as the For ring-opening step in the catalytic mechanism.

The protein belongs to the glucosamine/galactosamine-6-phosphate isomerase family. In terms of assembly, homohexamer.

Its subcellular location is the cytoplasm. The enzyme catalyses alpha-D-glucosamine 6-phosphate + H2O = beta-D-fructose 6-phosphate + NH4(+). Functionally, catalyzes the reversible conversion of alpha-D-glucosamine 6-phosphate (GlcN-6P) into beta-D-fructose 6-phosphate (Fru-6P) and ammonium ion, a regulatory reaction step in de novo uridine diphosphate-N-acetyl-alpha-D-glucosamine (UDP-GlcNAc) biosynthesis via hexosamine pathway. The polypeptide is Glucosamine-6-phosphate deaminase 2 (Xenopus tropicalis (Western clawed frog)).